The sequence spans 559 residues: TBC1 domain family member 24 (559 aa).

A 1,2-diacyl-sn-glycero-3-phospho-(1D-myo-inositol) contacts are provided by residues Lys36, Arg40, Lys238, Arg242, and 293–297 (RLFSR). Positions 47–262 (SHALRGKVYQ…KVRAGQPLES (216 aa)) constitute a Rab-GAP TBC domain. A TLDc domain is found at 343-554 (EIVSVREMRD…IAAVEAWGFQ (212 aa)). Phosphoserine is present on residues Ser473 and Ser480.

In terms of assembly, interacts with ARF6. In terms of tissue distribution, highest expression in brain.

The protein localises to the cell membrane. The protein resides in the cytoplasm. Its subcellular location is the cytoplasmic vesicle membrane. It localises to the presynapse. Its function is as follows. May act as a GTPase-activating protein for Rab family protein(s). Involved in neuronal projections development, probably through a negative modulation of ARF6 function. Involved in the regulation of synaptic vesicle trafficking. The sequence is that of TBC1 domain family member 24 (TBC1D24) from Homo sapiens (Human).